A 174-amino-acid chain; its full sequence is Adenine phosphoribosyltransferase (174 aa).

This sequence belongs to the purine/pyrimidine phosphoribosyltransferase family. As to quaternary structure, homodimer.

The protein resides in the cytoplasm. The enzyme catalyses AMP + diphosphate = 5-phospho-alpha-D-ribose 1-diphosphate + adenine. It participates in purine metabolism; AMP biosynthesis via salvage pathway; AMP from adenine: step 1/1. Catalyzes a salvage reaction resulting in the formation of AMP, that is energically less costly than de novo synthesis. The sequence is that of Adenine phosphoribosyltransferase from Lachnoclostridium phytofermentans (strain ATCC 700394 / DSM 18823 / ISDg) (Clostridium phytofermentans).